The primary structure comprises 440 residues: Thymidine phosphorylase (440 aa).

Belongs to the thymidine/pyrimidine-nucleoside phosphorylase family. Homodimer.

The catalysed reaction is thymidine + phosphate = 2-deoxy-alpha-D-ribose 1-phosphate + thymine. The protein operates within pyrimidine metabolism; dTMP biosynthesis via salvage pathway; dTMP from thymine: step 1/2. The enzymes which catalyze the reversible phosphorolysis of pyrimidine nucleosides are involved in the degradation of these compounds and in their utilization as carbon and energy sources, or in the rescue of pyrimidine bases for nucleotide synthesis. In Escherichia coli (strain 55989 / EAEC), this protein is Thymidine phosphorylase.